We begin with the raw amino-acid sequence, 506 residues long: Maturase K (506 aa).

This sequence belongs to the intron maturase 2 family. MatK subfamily.

It localises to the plastid. Its subcellular location is the chloroplast. In terms of biological role, usually encoded in the trnK tRNA gene intron. Probably assists in splicing its own and other chloroplast group II introns. The sequence is that of Maturase K from Lathyrus tingitanus (Tangier pea).